The following is a 442-amino-acid chain: UDP-N-acetylmuramate--L-alanine ligase (442 aa).

Residue 109–115 participates in ATP binding; that stretch reads GAHGKTS.

It belongs to the MurCDEF family.

It is found in the cytoplasm. It carries out the reaction UDP-N-acetyl-alpha-D-muramate + L-alanine + ATP = UDP-N-acetyl-alpha-D-muramoyl-L-alanine + ADP + phosphate + H(+). Its pathway is cell wall biogenesis; peptidoglycan biosynthesis. Functionally, cell wall formation. The protein is UDP-N-acetylmuramate--L-alanine ligase of Streptococcus pyogenes serotype M28 (strain MGAS6180).